The sequence spans 156 residues: Anaerobic ribonucleoside-triphosphate reductase-activating protein (156 aa).

Positions 26, 30, and 33 each coordinate [4Fe-4S] cluster. S-adenosyl-L-methionine contacts are provided by residues 32 to 34 and Gly-72; that span reads GCY.

Belongs to the organic radical-activating enzymes family. As to quaternary structure, forms a tetramer composed of two NrdD and two NrdG subunits. The cofactor is [4Fe-4S] cluster.

It carries out the reaction glycyl-[protein] + reduced [flavodoxin] + S-adenosyl-L-methionine = glycin-2-yl radical-[protein] + semiquinone [flavodoxin] + 5'-deoxyadenosine + L-methionine + H(+). Activation of anaerobic ribonucleoside-triphosphate reductase under anaerobic conditions by generation of an organic free radical, using S-adenosylmethionine and reduced flavodoxin as cosubstrates to produce 5'-deoxy-adenosine. The polypeptide is Anaerobic ribonucleoside-triphosphate reductase-activating protein (NRDG) (Escherichia coli (Bacteriophage T4)).